The chain runs to 312 residues: Iron/alpha-ketoglutarate-dependent dioxygenase penM (312 aa).

3 residues coordinate Fe cation: His134, Asp136, and His211. Residues 287–312 (LGLKSEQPLPDGMEKGSMQETDIGGQ) are disordered.

Belongs to the PhyH family. In terms of assembly, homodimer. Fe cation is required as a cofactor.

The catalysed reaction is (-)-cyclopeptine + 2-oxoglutarate + O2 = (Z)-dehydrocyclopeptine + succinate + CO2 + H2O. It carries out the reaction (Z)-dehydrocyclopeptine + 2-oxoglutarate + O2 = (-)-cyclopenine + succinate + CO2. The enzyme catalyses (-)-4'-methoxycyclopeptine + 2-oxoglutarate + O2 = (Z)-4'-methoxydehydrocyclopeptine + succinate + CO2 + H2O. It catalyses the reaction (Z)-4'-methoxydehydrocyclopeptine + 2-oxoglutarate + O2 = (-)-4'-methoxycyclopenine + succinate + CO2. Its pathway is secondary metabolite biosynthesis. The protein operates within alkaloid biosynthesis. It participates in mycotoxin biosynthesis. Iron/alpha-ketoglutarate-dependent dioxygenase; part of the gene cluster that mediates the biosynthesis of penigequinolones, potent insecticidal alkaloids that contain a highly modified 10-carbon prenyl group. The first stage is catalyzed by the nonribosomal peptide synthetase penN that condenses anthranilic acid and O-methyl-L-tyrosine to produce 4'-methoxycyclopeptin. 4'-methoxycyclopeptin is then converted to 4'-methoxydehydrocyclopeptin by the ketoglutarate-dependent dioxygenase penM through dehydrogenation to form a double bond between C-alpha and C-beta of the O-methyltyrosine side chain. PenM also converts its first product methoxydehydrocyclopeptin to 4'-methoxycyclopenin. The following conversion of 4'methoxycyclopenin into 4'-methoxyviridicatin is catalyzed by the cyclopenase penL. 4'-methoxyviridicatin is the precursor of quinolone natural products, and is further converted to quinolinone B. The prenyltransferase penI then catalyzes the canonical Friedel-Crafts alkylation of quinolinone B with dimethylallyl cation to yield dimethylallyl quinolone, which is subjected to FAD-dependent dehydrogenation by the FAD-linked oxidoreductase penH to yield conjugated aryl diene. The delta(3') double bond then serves as the site of the second alkylation with DMAPP catalyzed by the prenyltransferase penG to yield a carbenium ion intermediate, which can be attacked by H(2)O to yield a styrenyl quinolone containing a C3'-hydroxyprenyl chain, or undergo cyclization to yield yaequinolones J1 and J2. The conversion of the styrenyl quinolone into the tetrahydrofuran-containing yaequinolone C is performed by the FAD-dependent monooxygenase penE and involves epoxidation of the terminal C7'-C8' olefin, followed by epoxide ring opening initiated by the C3' hydroxyl group. The predicted cysteine hydrolase penJ acts as an epoxide hydrolase that enhances the rate of the 5-exo-tet cyclization step, increasing the yield of yaequinolone C. PenF catalyzes the cationic rearrangement of the epoxide formed by penE (before ring opening to produce yaequinolone C) into yaequinolone D. Finally, the short-chain dehydrogenase/reductase (SDR)-like reductase penD, catalyzes both the dehydration of yaequinolone D and the reduction of the resulting oxonium to yield penigequinolone. This Penicillium thymicola protein is Iron/alpha-ketoglutarate-dependent dioxygenase penM.